Here is a 1226-residue protein sequence, read N- to C-terminus: E3 ubiquitin-protein ligase mind-bomb (1226 aa).

A compositionally biased stretch (polar residues) spans 1 to 12; sequence MSCAATLSSAKD. Disordered regions lie at residues 1 to 42 and 66 to 87; these read MSCA…NTNT and GGGG…AGGV. The segment covering 19–30 has biased composition (gly residues); that stretch reads SGGGGGGGGGGA. 2 stretches are compositionally biased toward low complexity: residues 31–42 and 73–86; these read PTNSNTNTNTNT and GGTT…AAGG. In terms of domain architecture, MIB/HERC2 1 spans 100–168; sequence VRRFSMEGVG…AYDLRILDSA (69 aa). Residues 174–226 form a ZZ-type zinc finger; that stretch reads HEGTMCDTCRQQPIFGIRWKCAECINYDLCSICYHGDKHHLRHRFYRITTPGG. Zn(2+) is bound by residues Cys-179, Cys-182, Cys-194, Cys-197, Cys-203, Cys-206, His-212, and His-216. One can recognise an MIB/HERC2 2 domain in the interval 237-315; sequence SKKVLARGIF…MADLKVVNDA (79 aa). 8 ANK repeats span residues 567–596, 600–629, 633–662, 666–695, 699–731, 735–765, 769–798, and 802–833; these read AGHT…DVEI, DGDR…DLNA, RRQT…HPSL, EGDT…DITL, NGFN…IVEE, DGYT…NMDR, NLQT…DLNI, and DGDT…KLLM. Residues 890–919 are disordered; that stretch reads TDDSELPGNVAGTSSSARARAASGSLNQSS. The span at 900–914 shows a compositional bias: low complexity; that stretch reads AGTSSSARARAASGS. 2 RING-type zinc fingers span residues 970 to 1005 and 1017 to 1052; these read CLVC…LICR and CLVC…VLCR. Residues 1159-1181 are a coiled coil; that stretch reads VNNFQMDDVQKLKQQLQDIKEQT. An RING-type 3 zinc finger spans residues 1183–1216; sequence CPVCFDRIKNMVFLCGHGTCQMCGDQIEGCPICR.

In terms of assembly, interacts with intracellular domain of Dl and Ser. Ubiquitous in the wing imaginal disk (at protein level).

The protein resides in the cytoplasm. It localises to the cell cortex. It catalyses the reaction S-ubiquitinyl-[E2 ubiquitin-conjugating enzyme]-L-cysteine + [acceptor protein]-L-lysine = [E2 ubiquitin-conjugating enzyme]-L-cysteine + N(6)-ubiquitinyl-[acceptor protein]-L-lysine.. It functions in the pathway protein modification; protein ubiquitination. Its function is as follows. E3 ubiquitin-protein ligase that mediates ubiquitination of Delta (Dl) and Serrate (Ser) receptors, which act as ligands of Notch proteins. Positively regulates the Notch signaling by ubiquitinating the intracellular domain of Dl and Ser, leading to endocytosis of Dl and Ser receptors. Regulates a subset of Notch signaling events, including wing margin specification, leg segmentation and vein determination, that are distinct from those events requiring neuralize (neur) activity. Also modulates lateral inhibition, a neur- and Dl-dependent signaling event, suggesting a distinct but partially complementary function with neur. This chain is E3 ubiquitin-protein ligase mind-bomb (mib1), found in Drosophila melanogaster (Fruit fly).